Consider the following 640-residue polypeptide: 5-aminolevulinate synthase, non-specific, mitochondrial (640 aa).

Residues 1–56 constitute a mitochondrion transit peptide; that stretch reads METVVRSCPFLSRVPQAFLQKAGKSLLFYAQNCPKMMEVGAKPAPRALSTAAVHYQ. 2 disordered regions span residues 60 to 103 and 143 to 163; these read ETPP…TSQG and EVAE…GGDP. A compositionally biased stretch (polar residues) spans 75-92; it reads VQQTPDGSQQSPDGTQLP. 3 residues coordinate substrate: arginine 217, serine 334, and lysine 353. Pyridoxal 5'-phosphate contacts are provided by serine 386, histidine 414, and threonine 442. Lysine 445 is a catalytic residue. Lysine 445 carries the N6-(pyridoxal phosphate)lysine modification. Pyridoxal 5'-phosphate is bound by residues threonine 474 and threonine 475. Threonine 562 lines the substrate pocket. Proline 576 is subject to Hydroxyproline.

This sequence belongs to the class-II pyridoxal-phosphate-dependent aminotransferase family. In terms of assembly, homodimer. Interacts (hydroxylated form) with VHL. Pyridoxal 5'-phosphate serves as cofactor. In normoxia, is hydroxylated at Pro-576, promoting interaction with VHL, initiating ubiquitination and subsequent degradation via the proteasome. In terms of processing, ubiquitinated; in normoxia following hydroxylation and interaction with VHL, leading to its subsequent degradation via the proteasome.

Its subcellular location is the mitochondrion inner membrane. The catalysed reaction is succinyl-CoA + glycine + H(+) = 5-aminolevulinate + CO2 + CoA. The protein operates within porphyrin-containing compound metabolism; protoporphyrin-IX biosynthesis; 5-aminolevulinate from glycine: step 1/1. Catalyzes the pyridoxal 5'-phosphate (PLP)-dependent condensation of succinyl-CoA and glycine to form aminolevulinic acid (ALA), with CoA and CO2 as by-products. This Pongo abelii (Sumatran orangutan) protein is 5-aminolevulinate synthase, non-specific, mitochondrial (ALAS1).